We begin with the raw amino-acid sequence, 152 residues long: Large ribosomal subunit protein uL15 (152 aa).

Residues 1 to 56 (MTSTLNTLKSNLGSRKKKLRKGRGIAAGQGASCGFGMRGQKSRSGRPTRPGFEGGQ) form a disordered region. The segment covering 14 to 23 (SRKKKLRKGR) has biased composition (basic residues). The span at 25-37 (IAAGQGASCGFGM) shows a compositional bias: gly residues.

The protein belongs to the universal ribosomal protein uL15 family. Part of the 50S ribosomal subunit.

Functionally, binds to the 23S rRNA. This is Large ribosomal subunit protein uL15 from Prochlorococcus marinus (strain MIT 9515).